The following is a 141-amino-acid chain: Large ribosomal subunit protein uL14m (141 aa).

Residues 1-19 constitute a mitochondrion transit peptide; it reads MALSLSGLILPKLMQQRAF.

The protein belongs to the universal ribosomal protein uL14 family. In terms of assembly, component of the mitochondrial ribosome large subunit (39S) which comprises a 16S rRNA and about 50 distinct proteins. Interacts with MALSU1.

Its subcellular location is the mitochondrion. In terms of biological role, may form part of 2 intersubunit bridges in the assembled ribosome. Upon binding to MALSU1, intersubunit bridge formation is blocked, preventing ribosome formation and repressing translation. The protein is Large ribosomal subunit protein uL14m (mrpl14) of Danio rerio (Zebrafish).